Consider the following 20-residue polypeptide: uncharacterized protein (20 aa).

This is an uncharacterized protein from Serratia marcescens.